The primary structure comprises 1551 residues: UDP-glucose:glycoprotein glucosyltransferase 1 (1551 aa).

The signal sequence occupies residues Met-1–Ala-42. Asn-269, Asn-536, and Asn-1228 each carry an N-linked (GlcNAc...) asparagine glycan. The glucosyltransferase stretch occupies residues Lys-1244 to Leu-1551. Phosphoserine is present on Ser-1277. The segment at Lys-1531–Leu-1551 is disordered. A Prevents secretion from ER motif is present at residues His-1548 to Leu-1551.

It belongs to the glycosyltransferase 8 family. As to quaternary structure, monomer as well as in a tight complex with SELENOF. Interacts with METTL23. Part of a large chaperone multiprotein complex comprising DNAJB11, HSP90B1, HSPA5, HYOU, PDIA2, PDIA4, PDIA6, PPIB, SDF2L1, UGGT1 and very small amounts of ERP29, but not, or at very low levels, CALR nor CANX. The cofactor is Ca(2+). Mn(2+) serves as cofactor.

The protein localises to the endoplasmic reticulum lumen. Its subcellular location is the endoplasmic reticulum-Golgi intermediate compartment. It catalyses the reaction N(4)-(alpha-D-Man-(1-&gt;2)-alpha-D-Man-(1-&gt;2)-alpha-D-Man-(1-&gt;3)-[alpha-D-Man-(1-&gt;2)-alpha-D-Man-(1-&gt;3)-[alpha-D-Man-(1-&gt;2)-alpha-D-Man-(1-&gt;6)]-alpha-D-Man-(1-&gt;6)]-beta-D-Man-(1-&gt;4)-beta-D-GlcNAc-(1-&gt;4)-beta-D-GlcNAc)-L-asparaginyl-[protein] (N-glucan mannose isomer 9A1,2,3B1,2,3) + UDP-alpha-D-glucose = N(4)-(alpha-D-Glc-(1-&gt;3)-alpha-D-Man-(1-&gt;2)-alpha-D-Man-(1-&gt;2)-alpha-D-Man-(1-&gt;3)-[alpha-D-Man-(1-&gt;2)-alpha-D-Man-(1-&gt;3)-[alpha-D-Man-(1-&gt;2)-alpha-D-Man-(1-&gt;6)]-alpha-D-Man-(1-&gt;6)]-beta-D-Man-(1-&gt;4)-beta-D-GlcNAc-(1-&gt;4)-beta-D-GlcNAc)-L-asparaginyl-[protein] + UDP + H(+). The protein operates within protein modification; protein glycosylation. Functionally, recognizes glycoproteins with minor folding defects. Reglucosylates single N-glycans near the misfolded part of the protein, thus providing quality control for protein folding in the endoplasmic reticulum. Reglucosylated proteins are recognized by calreticulin for recycling to the endoplasmic reticulum and refolding or degradation. The sequence is that of UDP-glucose:glycoprotein glucosyltransferase 1 (Uggt1) from Mus musculus (Mouse).